A 216-amino-acid polypeptide reads, in one-letter code: Octanoyltransferase (216 aa).

The BPL/LPL catalytic domain maps to 24-212 (KFRKECILFL…NLCSFLEPIN (189 aa)). Residues 69–76 (RGGDFTAH), 140–142 (SIG), and 153–155 (GIA) each bind substrate. The Acyl-thioester intermediate role is filled by Cys-171.

It belongs to the LipB family.

It is found in the cytoplasm. The enzyme catalyses octanoyl-[ACP] + L-lysyl-[protein] = N(6)-octanoyl-L-lysyl-[protein] + holo-[ACP] + H(+). Its pathway is protein modification; protein lipoylation via endogenous pathway; protein N(6)-(lipoyl)lysine from octanoyl-[acyl-carrier-protein]: step 1/2. Functionally, catalyzes the transfer of endogenously produced octanoic acid from octanoyl-acyl-carrier-protein onto the lipoyl domains of lipoate-dependent enzymes. Lipoyl-ACP can also act as a substrate although octanoyl-ACP is likely to be the physiological substrate. The sequence is that of Octanoyltransferase from Leptospira interrogans serogroup Icterohaemorrhagiae serovar Lai (strain 56601).